The primary structure comprises 133 residues: Endoribonuclease YbeY (133 aa).

The Zn(2+) site is built by His105, His109, and His115.

It belongs to the endoribonuclease YbeY family. It depends on Zn(2+) as a cofactor.

Its subcellular location is the cytoplasm. In terms of biological role, single strand-specific metallo-endoribonuclease involved in late-stage 70S ribosome quality control and in maturation of the 3' terminus of the 16S rRNA. The polypeptide is Endoribonuclease YbeY (Lawsonia intracellularis (strain PHE/MN1-00)).